Consider the following 70-residue polypeptide: Large ribosomal subunit protein bL31 (70 aa).

4 residues coordinate Zn(2+): Cys16, Cys18, Cys37, and Cys40.

It belongs to the bacterial ribosomal protein bL31 family. Type A subfamily. As to quaternary structure, part of the 50S ribosomal subunit. The cofactor is Zn(2+).

Binds the 23S rRNA. The polypeptide is Large ribosomal subunit protein bL31 (Colwellia psychrerythraea (strain 34H / ATCC BAA-681) (Vibrio psychroerythus)).